A 265-amino-acid polypeptide reads, in one-letter code: Phosphonates import ATP-binding protein PhnC 1 (265 aa).

The ABC transporter domain occupies 3-247 (LRLSGIELRH…HLDTLYANEQ (245 aa)). 36 to 43 (GPSGAGKT) serves as a coordination point for ATP. The disordered stretch occupies residues 245-265 (NEQLSPQPAPDVSETPWTPRC).

This sequence belongs to the ABC transporter superfamily. Phosphonates importer (TC 3.A.1.9.1) family. The complex is composed of two ATP-binding proteins (PhnC), two transmembrane proteins (PhnE) and a solute-binding protein (PhnD).

It localises to the cell inner membrane. The catalysed reaction is phosphonate(out) + ATP + H2O = phosphonate(in) + ADP + phosphate + H(+). Its function is as follows. Part of the ABC transporter complex PhnCDE involved in phosphonates import. Responsible for energy coupling to the transport system. This chain is Phosphonates import ATP-binding protein PhnC 1, found in Pseudomonas savastanoi pv. phaseolicola (strain 1448A / Race 6) (Pseudomonas syringae pv. phaseolicola (strain 1448A / Race 6)).